The primary structure comprises 1172 residues: Ras guanine nucleotide exchange factor W (1172 aa).

2 stretches are compositionally biased toward low complexity: residues 34–70 and 78–87; these read PIYTNDNSNNNNNDETSSNISGSNSIQNLSLNNLNNL and NSNSVNNTIS. Disordered stretches follow at residues 34 to 100, 138 to 162, and 186 to 246; these read PIYT…RSNT, KFLDQHTPPPSPKPEHLSGHLRIQQ, and FKRS…EIKD. Residues 194-241 show a composition bias toward low complexity; it reads QPPQSQSQQQQQLQLQQQQQQSMPNLSLGNNINSNNNNNNGSENNDIS. A run of 6 helical transmembrane segments spans residues 286–306, 320–340, 347–367, 378–400, 432–452, and 545–565; these read IWLTIMIISIIFVLFIDDIIG, IMAVKCSIIGFFSIDIILNLF, FPGTIVFWLDLISLISIVTDI, VLSITVNTRIIRICGSFIRISLI, LTTNKIVLLALAVLFATQLLV, and ILHLCLTVFVILVLITINLLI. A coiled-coil region spans residues 666 to 702; the sequence is LLGMLNEIDDSLQAAKEKVEEESIQNSILKKDIEDLY. The N-terminal Ras-GEF domain maps to 765–903; the sequence is DLNVIQYATI…YIDSIHKRKM (139 aa). A Ras-GEF domain is found at 938–1170; that stretch reads DISDIAIQIT…WKMSLSCEQR (233 aa).

The protein localises to the membrane. Promotes the exchange of Ras-bound GDP by GTP. The sequence is that of Ras guanine nucleotide exchange factor W (gefW) from Dictyostelium discoideum (Social amoeba).